We begin with the raw amino-acid sequence, 145 residues long: MNKIRKWLDKIPWYTDEIHSILMYLIMGGFTTLINIVTFWLCTYVLNWDYRIANTIAWVASVLFAYFSNKKYVFESYTPTWKERAREVTSFFGFRFLTYLVDILVMILLIEVLSINELWAKIWTNVIVLVLNYVFSKWIIFKVKK.

Transmembrane regions (helical) follow at residues 21-41, 52-69, 96-116, and 121-141; these read ILMYLIMGGFTTLINIVTFWL, IANTIAWVASVLFAYFSN, FLTYLVDILVMILLIEVLSIN, and KIWTNVIVLVLNYVFSKWIIF.

Belongs to the GtrA family.

The protein resides in the cell membrane. Its function is as follows. Involved in the decoration of cell wall teichoic acid with galactose and glucose. The polypeptide is Cell wall teichoic acid glycosylation protein GtcA (gtcA) (Listeria monocytogenes serovar 1/2a (strain ATCC BAA-679 / EGD-e)).